Here is a 446-residue protein sequence, read N- to C-terminus: Methionine aminopeptidase 2 (446 aa).

The interval M1–F91 is disordered. Acidic residues predominate over residues E36–V48. The span at K59 to A72 shows a compositional bias: basic residues. H199 serves as a coordination point for substrate. Residues D219, D230, and H299 each coordinate a divalent metal cation. H307 contributes to the substrate binding site. 2 residues coordinate a divalent metal cation: E332 and E427.

This sequence belongs to the peptidase M24A family. Methionine aminopeptidase eukaryotic type 2 subfamily. It depends on Co(2+) as a cofactor. Zn(2+) is required as a cofactor. The cofactor is Mn(2+). Fe(2+) serves as cofactor.

It is found in the cytoplasm. The catalysed reaction is Release of N-terminal amino acids, preferentially methionine, from peptides and arylamides.. Functionally, cotranslationally removes the N-terminal methionine from nascent proteins. The N-terminal methionine is often cleaved when the second residue in the primary sequence is small and uncharged (Met-Ala-, Cys, Gly, Pro, Ser, Thr, or Val). This is Methionine aminopeptidase 2 from Sclerotinia sclerotiorum (strain ATCC 18683 / 1980 / Ss-1) (White mold).